The following is a 427-amino-acid chain: 3-phosphoshikimate 1-carboxyvinyltransferase (427 aa).

Lys22, Ser23, and Arg27 together coordinate 3-phosphoshikimate. Lys22 serves as a coordination point for phosphoenolpyruvate. Residues Gly96 and Arg124 each coordinate phosphoenolpyruvate. 7 residues coordinate 3-phosphoshikimate: Ser169, Ser170, Gln171, Ser197, Asp313, Asn336, and Lys340. Gln171 contacts phosphoenolpyruvate. Asp313 (proton acceptor) is an active-site residue. 3 residues coordinate phosphoenolpyruvate: Arg344, Arg386, and Lys411.

Belongs to the EPSP synthase family. As to quaternary structure, monomer.

The protein resides in the cytoplasm. It carries out the reaction 3-phosphoshikimate + phosphoenolpyruvate = 5-O-(1-carboxyvinyl)-3-phosphoshikimate + phosphate. The protein operates within metabolic intermediate biosynthesis; chorismate biosynthesis; chorismate from D-erythrose 4-phosphate and phosphoenolpyruvate: step 6/7. In terms of biological role, catalyzes the transfer of the enolpyruvyl moiety of phosphoenolpyruvate (PEP) to the 5-hydroxyl of shikimate-3-phosphate (S3P) to produce enolpyruvyl shikimate-3-phosphate and inorganic phosphate. This Salmonella heidelberg (strain SL476) protein is 3-phosphoshikimate 1-carboxyvinyltransferase.